The chain runs to 197 residues: EF-hand calcium-binding domain-containing protein 9 (197 aa).

Ca(2+) contacts are provided by D58 and D69. EF-hand domains lie at 59–94 (LKKA…LLAH), 100–135 (GQFM…FLFN), and 136–171 (IQKQ…YTDK). Ca(2+) contacts are provided by D149, D153, R155, and E160. The segment covering 177-188 (KTEEKEKGERKR) has biased composition (basic and acidic residues). Residues 177–197 (KTEEKEKGERKRSLYSKCHIK) form a disordered region.

As to quaternary structure, component of the CatSper complex or CatSpermasome composed of the core pore-forming members CATSPER1, CATSPER2, CATSPER3 and CATSPER4 as well as auxiliary members CATSPERB, CATSPERG, CATSPERD, CATSPERE, CATSPERZ, C2CD6/CATSPERT, TMEM249, TMEM262 and EFCAB9. HSPA1 may be an additional auxiliary complex member. The core complex members CATSPER1, CATSPER2, CATSPER3 and CATSPER4 form a heterotetrameric channel. The auxiliary CATSPERB, CATSPERG, CATSPERD and CATSPERE subunits form a pavilion-like structure over the pore which stabilizes the complex through interactions with CATSPER4, CATSPER3, CATSPER1 and CATSPER2 respectively. TMEM262/CATSPERH interacts with CATSPERB, further stabilizing the complex. C2CD6/CATSPERT interacts at least with CATSPERD and is required for targeting the CatSper complex in the flagellar membrane. Interacts with CATSPERZ; the interaction is direct, Ca(2+)-dependent and connects EFCAB9 with the CatSper complex. Dissociates from CATSPERZ at elevated pH.

The protein resides in the cytoplasm. The protein localises to the cell projection. It is found in the cilium. Its subcellular location is the flagellum. Functionally, auxiliary component of the CatSper complex, a complex involved in sperm cell hyperactivation. pH-dependent Ca(2+) sensor required to activate the CatSper channel. Sperm cell hyperactivation is needed for sperm motility which is essential late in the preparation of sperm for fertilization. Associates with the CatSper complex via direct interaction with CATSPERZ, and senses intracellular Ca(2+). Together with CATSPERZ, associates with the CatSper channel pore and is required for the two-row structure of each single CatSper channel. This chain is EF-hand calcium-binding domain-containing protein 9, found in Homo sapiens (Human).